We begin with the raw amino-acid sequence, 129 residues long: MKYFVVALALVAAFACIAESKPAESEHELAEVEEENELADLEDAVWLEHLADLSDLEEARGFFGNTWKKIKGKADKIMLKKAVKIMVKKEGISKEEAQAKVDAMSKKQIRLYLLKHYGKKALQKASEKL.

A signal peptide spans 1–20 (MKYFVVALALVAAFACIAES). A propeptide spanning residues 21–60 (KPAESEHELAEVEEENELADLEDAVWLEHLADLSDLEEAR) is cleaved from the precursor. Residues 57–60 (EEAR) carry the Processing quadruplet motif motif.

In terms of processing, cleavage of the propeptide depends on the processing quadruplet motif (XXXR, with at least one of X being E). Expressed by the venom gland.

It is found in the secreted. Functionally, insecticidal, cytolytic and antimicrobial peptide. Has insecticidal activity against the flesh fly S.carnaria. Has antibacterial activity against the Gram-negative bacteria E.coli. Forms voltage-dependent, ion-permeable channels in membranes. At high concentration causes cell membrane lysis. In Lachesana tarabaevi (Spider), this protein is M-zodatoxin-Lt8f (cit 1-7).